A 238-amino-acid chain; its full sequence is Ribonuclease HII (238 aa).

The 193-residue stretch at 23-215 folds into the RNase H type-2 domain; sequence QRLCGVDEAG…VREALARLPM (193 aa). A divalent metal cation is bound by residues D29, E30, and D124.

This sequence belongs to the RNase HII family. It depends on Mn(2+) as a cofactor. Mg(2+) serves as cofactor.

Its subcellular location is the cytoplasm. It carries out the reaction Endonucleolytic cleavage to 5'-phosphomonoester.. Functionally, endonuclease that specifically degrades the RNA of RNA-DNA hybrids. The polypeptide is Ribonuclease HII (Cupriavidus necator (strain ATCC 17699 / DSM 428 / KCTC 22496 / NCIMB 10442 / H16 / Stanier 337) (Ralstonia eutropha)).